We begin with the raw amino-acid sequence, 177 residues long: Neuroblastoma suppressor of tumorigenicity 1 (177 aa).

The N-terminal stretch at 1 to 16 is a signal peptide; sequence MLWFVVGALFPALLLA. Cystine bridges form between Cys-34–Cys-84, Cys-48–Cys-98, Cys-58–Cys-117, Cys-62–Cys-119, and Cys-81–Cys-122. A CTCK domain is found at 34-123; it reads CEAKNITQIV…ILHCSCQACG (90 aa). Residues 143 to 177 are disordered; it reads MPAEGPGPHHYAHHQQEVEEPPASSHHHHEEEGDE.

This sequence belongs to the DAN family.

The protein localises to the secreted. Its function is as follows. May act as a tumor suppressor. The sequence is that of Neuroblastoma suppressor of tumorigenicity 1 (NBL1) from Gallus gallus (Chicken).